The sequence spans 109 residues: Mannose-specific lectin (109 aa).

The Bulb-type lectin domain occupies 25–109 (MQEDCNLVLY…ARWATGTNIH (85 aa)). Glutamine 26, aspartate 28, asparagine 30, tyrosine 34, aspartate 37, lysine 38, tryptophan 41, alanine 42, asparagine 44, glutamine 57, aspartate 59, asparagine 61, tyrosine 65, isoleucine 72, tryptophan 73, asparagine 76, asparagine 83, glutamine 89, aspartate 91, asparagine 93, tyrosine 97, and tryptophan 102 together coordinate alpha-D-mannopyranose. Cysteine 29 and cysteine 52 are oxidised to a cystine.

As to quaternary structure, homotetramer; antiparallel. As to expression, detected in bulbs (at protein level).

It localises to the secreted. Its activity is regulated as follows. Strongly inhibited by alpha-1,6-linked mannotriose. Inhibited by various oligosaccharides of P.pastoris mannan including, Man(alpha-l,6)Man-alpha-O-Me, Man(alpha-l,2)Man, Man(alpha-l,3)Man-alpha-O-Me, Man(alpha-l,2)Man, alpha-1,2-linked mannotriose, and Man(alpha-1,6)Glc, in order of decreasing potency. Weakly inhibited by elsinotetraose. Not inhibited by maltose or nigerose. Its function is as follows. D-mannose-binding lectin which binds alpha-D-linked mannose. Displays a high affinity for alpha-(1-6)-mannose oligomers. Able to interact with both terminal and internal alpha-D-mannosyl residues. Displays antiviral activity and therefore may contribute to defense against infections. This chain is Mannose-specific lectin, found in Narcissus pseudonarcissus (Daffodil).